Consider the following 165-residue polypeptide: Shikimate kinase (165 aa).

Residue 11-16 (GAGKTT) participates in ATP binding. Mg(2+) is bound at residue threonine 15. Positions 33, 57, and 78 each coordinate substrate. Residue arginine 116 coordinates ATP. Substrate is bound at residue arginine 134.

This sequence belongs to the shikimate kinase family. In terms of assembly, monomer. The cofactor is Mg(2+).

It localises to the cytoplasm. The enzyme catalyses shikimate + ATP = 3-phosphoshikimate + ADP + H(+). It participates in metabolic intermediate biosynthesis; chorismate biosynthesis; chorismate from D-erythrose 4-phosphate and phosphoenolpyruvate: step 5/7. In terms of biological role, catalyzes the specific phosphorylation of the 3-hydroxyl group of shikimic acid using ATP as a cosubstrate. This Bacillus cytotoxicus (strain DSM 22905 / CIP 110041 / 391-98 / NVH 391-98) protein is Shikimate kinase.